The primary structure comprises 144 residues: Large ribosomal subunit protein uL13 (144 aa).

This sequence belongs to the universal ribosomal protein uL13 family. In terms of assembly, part of the 50S ribosomal subunit.

This protein is one of the early assembly proteins of the 50S ribosomal subunit, although it is not seen to bind rRNA by itself. It is important during the early stages of 50S assembly. The polypeptide is Large ribosomal subunit protein uL13 (Nitratidesulfovibrio vulgaris (strain DSM 19637 / Miyazaki F) (Desulfovibrio vulgaris)).